A 633-amino-acid polypeptide reads, in one-letter code: Probable methyltransferase PMT17 (633 aa).

Over 1–18 the chain is Cytoplasmic; that stretch reads MAKENSGHHHQTEARRKK. Residues 19 to 39 form a helical; Signal-anchor for type II membrane protein membrane-spanning segment; it reads LTLILGVSGLCILFYVLGAWQ. The Lumenal portion of the chain corresponds to 40-633; it reads ANTVPSSISK…NNNNNNNNNN (594 aa). The segment at 50 to 71 is disordered; it reads LGCETQSNPSSSSSSSSSSESA. The segment covering 59–70 has biased composition (low complexity); the sequence is SSSSSSSSSSES. Asn87 carries an N-linked (GlcNAc...) asparagine glycan.

The protein belongs to the methyltransferase superfamily.

The protein localises to the endoplasmic reticulum membrane. The chain is Probable methyltransferase PMT17 from Arabidopsis thaliana (Mouse-ear cress).